The following is a 485-amino-acid chain: GTPase Obg (485 aa).

Positions 2-159 (PRFVDRVVIH…RDLTLELKTV (158 aa)) constitute an Obg domain. The OBG-type G domain occupies 160–341 (ADVGLIGFPS…LIFALWEMVK (182 aa)). GTP contacts are provided by residues 166–173 (GFPSAGKS), 191–195 (FTTLV), 212–215 (DVPG), 292–295 (NKID), and 322–324 (STV). 2 residues coordinate Mg(2+): S173 and T193. An OCT domain is found at 359–437 (PIPVDESGFT…IGDVTFDWEP (79 aa)). The interval 450–485 (RGTDIRLEQTDRVGAAERKAARRERRQPGESGGEDS) is disordered. A compositionally biased stretch (basic and acidic residues) spans 452–468 (TDIRLEQTDRVGAAERK).

This sequence belongs to the TRAFAC class OBG-HflX-like GTPase superfamily. OBG GTPase family. Monomer. Mg(2+) serves as cofactor.

Its subcellular location is the cytoplasm. In terms of biological role, an essential GTPase which binds GTP, GDP and possibly (p)ppGpp with moderate affinity, with high nucleotide exchange rates and a fairly low GTP hydrolysis rate. Plays a role in control of the cell cycle, stress response, ribosome biogenesis and in those bacteria that undergo differentiation, in morphogenesis control. This chain is GTPase Obg, found in Mycolicibacterium smegmatis (strain ATCC 700084 / mc(2)155) (Mycobacterium smegmatis).